The primary structure comprises 488 residues: Glutamyl-tRNA(Gln) amidotransferase subunit A (488 aa).

Active-site charge relay system residues include Lys-77 and Ser-152. The active-site Acyl-ester intermediate is the Ser-176.

It belongs to the amidase family. GatA subfamily. As to quaternary structure, heterotrimer of A, B and C subunits.

It catalyses the reaction L-glutamyl-tRNA(Gln) + L-glutamine + ATP + H2O = L-glutaminyl-tRNA(Gln) + L-glutamate + ADP + phosphate + H(+). Its function is as follows. Allows the formation of correctly charged Gln-tRNA(Gln) through the transamidation of misacylated Glu-tRNA(Gln) in organisms which lack glutaminyl-tRNA synthetase. The reaction takes place in the presence of glutamine and ATP through an activated gamma-phospho-Glu-tRNA(Gln). The sequence is that of Glutamyl-tRNA(Gln) amidotransferase subunit A from Streptococcus mutans serotype c (strain ATCC 700610 / UA159).